The following is a 612-amino-acid chain: Dihydroxy-acid dehydratase (612 aa).

D81 serves as a coordination point for Mg(2+). C122 contributes to the [2Fe-2S] cluster binding site. Residues D123 and K124 each contribute to the Mg(2+) site. Residue K124 is modified to N6-carboxylysine. C193 provides a ligand contact to [2Fe-2S] cluster. E489 provides a ligand contact to Mg(2+). S515 functions as the Proton acceptor in the catalytic mechanism.

Belongs to the IlvD/Edd family. Homodimer. It depends on [2Fe-2S] cluster as a cofactor. The cofactor is Mg(2+).

It carries out the reaction (2R)-2,3-dihydroxy-3-methylbutanoate = 3-methyl-2-oxobutanoate + H2O. The catalysed reaction is (2R,3R)-2,3-dihydroxy-3-methylpentanoate = (S)-3-methyl-2-oxopentanoate + H2O. Its pathway is amino-acid biosynthesis; L-isoleucine biosynthesis; L-isoleucine from 2-oxobutanoate: step 3/4. It participates in amino-acid biosynthesis; L-valine biosynthesis; L-valine from pyruvate: step 3/4. Its function is as follows. Functions in the biosynthesis of branched-chain amino acids. Catalyzes the dehydration of (2R,3R)-2,3-dihydroxy-3-methylpentanoate (2,3-dihydroxy-3-methylvalerate) into 2-oxo-3-methylpentanoate (2-oxo-3-methylvalerate) and of (2R)-2,3-dihydroxy-3-methylbutanoate (2,3-dihydroxyisovalerate) into 2-oxo-3-methylbutanoate (2-oxoisovalerate), the penultimate precursor to L-isoleucine and L-valine, respectively. The polypeptide is Dihydroxy-acid dehydratase (Stenotrophomonas maltophilia (strain K279a)).